Here is a 955-residue protein sequence, read N- to C-terminus: GPI inositol-deacylase B (955 aa).

N-linked (GlcNAc...) asparagine glycosylation occurs at N7. A helical membrane pass occupies residues 8-28; sequence ASVALWTVFTILTIWISFALH. S180 is a catalytic residue. Residue N431 is glycosylated (N-linked (GlcNAc...) asparagine). The next 4 membrane-spanning stretches (helical) occupy residues 489–509, 600–620, 643–663, and 703–723; these read IAFP…SGGV, LLFS…FWRY, YLSW…FEFI, and PIGV…VVVV. N753 carries an N-linked (GlcNAc...) asparagine glycan. Transmembrane regions (helical) follow at residues 772-792, 840-860, and 870-890; these read VIIA…LAFA, TMSV…AVWV, and IFSS…IENL. An N-linked (GlcNAc...) asparagine glycan is attached at N914. Residues 919 to 939 form a helical membrane-spanning segment; sequence GMMHAFMIHHWFNLLAGWLLI. N945 is a glycosylation site (N-linked (GlcNAc...) asparagine).

It belongs to the GPI inositol-deacylase family.

Its subcellular location is the endoplasmic reticulum membrane. Functionally, involved in inositol deacylation of GPI-anchored proteins which plays important roles in the quality control and ER-associated degradation of GPI-anchored proteins. The protein is GPI inositol-deacylase B (BST1B) of Yarrowia lipolytica (strain CLIB 122 / E 150) (Yeast).